Consider the following 482-residue polypeptide: Anthranilate synthase component 1 (482 aa).

Residues S47 and 267 to 269 (PYM) each bind L-tryptophan. Residue 302-303 (GT) coordinates chorismate. E329 contacts Mg(2+). Chorismate contacts are provided by residues Y417, R437, 451-453 (GGG), and G453. E466 contacts Mg(2+).

It belongs to the anthranilate synthase component I family. Heterotetramer consisting of two non-identical subunits: a beta subunit (TrpG) and a large alpha subunit (TrpE). Mg(2+) serves as cofactor.

The enzyme catalyses chorismate + L-glutamine = anthranilate + pyruvate + L-glutamate + H(+). The protein operates within amino-acid biosynthesis; L-tryptophan biosynthesis; L-tryptophan from chorismate: step 1/5. Feedback inhibited by tryptophan. In terms of biological role, part of a heterotetrameric complex that catalyzes the two-step biosynthesis of anthranilate, an intermediate in the biosynthesis of L-tryptophan. In the first step, the glutamine-binding beta subunit (TrpG) of anthranilate synthase (AS) provides the glutamine amidotransferase activity which generates ammonia as a substrate that, along with chorismate, is used in the second step, catalyzed by the large alpha subunit of AS (TrpE) to produce anthranilate. In the absence of TrpG, TrpE can synthesize anthranilate directly from chorismate and high concentrations of ammonia. The protein is Anthranilate synthase component 1 (trpE) of Spirochaeta aurantia.